The chain runs to 211 residues: MFALKFASLFILAYLLGSFPAGVVVGKIFFYKDIRKYGSGNIGTTNTFRVLGPVAGIIVFLIDFFKGTLATLIPVIFNLGPHYLCLIFGLVAILGHAFPIFLKFKGGKAVATSAGFLLGYNVHFFLICAVIFIPILFITSMVSLTSLISVVLIFIASFFFHDIALSIISGLLVILIYWSHRSNIARIEKHQENMVPFGVVYWLKNKHTKSK.

5 consecutive transmembrane segments (helical) span residues 6 to 26 (FASL…VVVG), 57 to 77 (IIVF…PVIF), 82 to 102 (HYLC…PIFL), 124 to 144 (FFLI…MVSL), and 148 to 168 (ISVV…LSII).

The protein belongs to the PlsY family. Probably interacts with PlsX.

It localises to the cell membrane. The catalysed reaction is an acyl phosphate + sn-glycerol 3-phosphate = a 1-acyl-sn-glycero-3-phosphate + phosphate. It functions in the pathway lipid metabolism; phospholipid metabolism. In terms of biological role, catalyzes the transfer of an acyl group from acyl-phosphate (acyl-PO(4)) to glycerol-3-phosphate (G3P) to form lysophosphatidic acid (LPA). This enzyme utilizes acyl-phosphate as fatty acyl donor, but not acyl-CoA or acyl-ACP. The protein is Glycerol-3-phosphate acyltransferase 2 of Lactobacillus acidophilus (strain ATCC 700396 / NCK56 / N2 / NCFM).